The following is a 1441-amino-acid chain: Probable ubiquitin-conjugating enzyme E2 R521 (1441 aa).

A helical membrane pass occupies residues 20 to 40; the sequence is YIHHIIINYITNSILYFFLIM. Residues 63-89 adopt a coiled-coil conformation; that stretch reads NQSKLVNTLDIIKDEINKWEEKNTDKD. Over residues 180–199 the composition is skewed to basic and acidic residues; sequence VSKDKMKDKSESNSEHEQES. 2 disordered regions span residues 180–207 and 283–305; these read VSKD…SNEI and IFGK…MSKV. A compositionally biased stretch (low complexity) spans 286 to 303; that stretch reads KSKNSGPSSSKTSISSMS. The stretch at 340 to 368 forms a coiled coil; it reads TTNEDNNDLDNLINEVERLVQETKDQETK. Residues 505–538 are compositionally biased toward low complexity; it reads TVEPVQEVAEEPVQQEVAEEPVQQEVAEEPVQQE. 2 disordered regions span residues 505 to 554 and 577 to 605; these read TVEP…PVQK and NDFS…NNLG. A compositionally biased stretch (acidic residues) spans 539–549; that stretch reads VAEEPVQEVAE. The region spanning 1217–1380 is the UBC core domain; the sequence is AISRELLSHS…VRFNCMKWAM (164 aa). The active-site Glycyl thioester intermediate is Cys1306.

The protein belongs to the ubiquitin-conjugating enzyme family.

Its subcellular location is the membrane. The enzyme catalyses S-ubiquitinyl-[E1 ubiquitin-activating enzyme]-L-cysteine + [E2 ubiquitin-conjugating enzyme]-L-cysteine = [E1 ubiquitin-activating enzyme]-L-cysteine + S-ubiquitinyl-[E2 ubiquitin-conjugating enzyme]-L-cysteine.. It functions in the pathway protein modification; protein ubiquitination. In terms of biological role, catalyzes the covalent attachment of ubiquitin to other proteins. This Acanthamoeba polyphaga (Amoeba) protein is Probable ubiquitin-conjugating enzyme E2 R521.